Consider the following 703-residue polypeptide: Prolyl 3-hydroxylase 2 (703 aa).

The signal sequence occupies residues 1–21; it reads MRESTWVSLLLLLLLPAPQRG. The interval 18-40 is disordered; it reads PQRGGPQDGRGSPEPEPERGPLQ. TPR repeat units follow at residues 42 to 75, 144 to 177, 205 to 238, and 301 to 334; these read FDLLYASGVAAYYSGDYEGAVRDLEAALRSHRRL, RVPYNYLQRAYIKLNQLDKAMEAAHTFFMANPEH, HLESYNAGVKHYEADDFEAAIKYFEQALREYFNE, and PLHYDYLQFAYYRVGEYVKALECAKAYLMFHPDD. 3 N-linked (GlcNAc...) asparagine glycosylation sites follow: Asn-444, Asn-455, and Asn-544. The Fe2OG dioxygenase domain maps to 552 to 666; the sequence is THMVCRTALS…RCAVALWFTL (115 aa). 3 residues coordinate Fe cation: His-575, Asp-577, and His-647. The active site involves Arg-657. The short motif at 700–703 is the Prevents secretion from ER element; the sequence is KDEL.

Belongs to the leprecan family. It depends on Fe cation as a cofactor. L-ascorbate is required as a cofactor. As to expression, detected at low levels in cartilage.

The protein resides in the endoplasmic reticulum. It localises to the sarcoplasmic reticulum. It is found in the golgi apparatus. It catalyses the reaction L-prolyl-[collagen] + 2-oxoglutarate + O2 = trans-3-hydroxy-L-prolyl-[collagen] + succinate + CO2. Its function is as follows. Prolyl 3-hydroxylase that catalyzes the post-translational formation of 3-hydroxyproline on collagens. Contributes to proline 3-hydroxylation of collagen COL4A1 and COL1A1 in tendons, the eye sclera and in the eye lens capsule. Has high activity with the type IV collagen COL4A1, and lower activity with COL1A1. Catalyzes hydroxylation of the first Pro in Gly-Pro-Hyp sequences where Hyp is 4-hydroxyproline. Has no activity on substrates that lack 4-hydroxyproline in the third position. This Rattus norvegicus (Rat) protein is Prolyl 3-hydroxylase 2.